We begin with the raw amino-acid sequence, 527 residues long: Peptide chain release factor 3 (527 aa).

In terms of domain architecture, tr-type G spans 9–277 (AKRRTFAIIS…AVVNWAPMPL (269 aa)). GTP-binding positions include 18-25 (SHPDAGKT), 86-90 (DTPGH), and 140-143 (NKLD).

It belongs to the TRAFAC class translation factor GTPase superfamily. Classic translation factor GTPase family. PrfC subfamily.

The protein resides in the cytoplasm. Functionally, increases the formation of ribosomal termination complexes and stimulates activities of RF-1 and RF-2. It binds guanine nucleotides and has strong preference for UGA stop codons. It may interact directly with the ribosome. The stimulation of RF-1 and RF-2 is significantly reduced by GTP and GDP, but not by GMP. The sequence is that of Peptide chain release factor 3 from Pseudomonas syringae pv. tomato (strain ATCC BAA-871 / DC3000).